We begin with the raw amino-acid sequence, 346 residues long: MLSVYSDDHRLHFGQSELVDGKLQPCFEMPSRADTVLARVKSQNLGEVIAPKDFGREPLLRLHDAAYLDFLQGAWARWTAEGHSGDLVSTTFPGRRLRRDGPIPTALMGELGYYSFDTEAPITAGTWQAIYSSAQVALTAQEHMRQGARSAFALCRPPGHHAGGDFMGGYCFLNNAAIATQAFLDQGARRVAILDVDYHHGNGTQDIFYRRDDVLFASIHGDPRVEYPYFLGYADERGEGAGEGCNHNYPLAHGSGWDLWSAALDDACVRIAGYAPDALVISLGVDTYKEDPISQFRLDSPDYLRMGERIARLGLPTLFIMEGGYAVEAIGINAVNVLQGYEGAAR.

Catalysis depends on His161, which acts as the Proton donor/acceptor. Zn(2+) is bound by residues Asp197, His199, and Asp286.

Belongs to the histone deacetylase family. As to quaternary structure, homodimer. Zn(2+) is required as a cofactor.

It carries out the reaction N-acetylputrescine + H2O = putrescine + acetate. It catalyses the reaction N-acetylcadaverine + H2O = cadaverine + acetate. The enzyme catalyses N(1)-acetylspermine + H2O = spermine + acetate. The catalysed reaction is N(1)-acetylspermidine + H2O = spermidine + acetate. The protein operates within amine and polyamine metabolism. Catalyzes the deacetylation of acetylated polyamines such as N-acetylputrescine, N-acetylcadaverine, N(1)-acetylspermine and N(1)-acetylspermidine. Plays an important role in the metabolism of acetylated polyamines in P.aeruginosa. Is involved in the degradation pathways of N-acetylputrescine and N-acetylcadaverine, that allow P.aeruginosa to utilize these acetylpolyamines as a carbon source under glucose starvation. In vitro, can also hydrolyze artificial trifluoroacetylated and acetylated lysine-derivatives. This chain is Acetylpolyamine amidohydrolase 1, found in Pseudomonas aeruginosa (strain ATCC 15692 / DSM 22644 / CIP 104116 / JCM 14847 / LMG 12228 / 1C / PRS 101 / PAO1).